A 204-amino-acid polypeptide reads, in one-letter code: MTKMYINTIIEYIDSNIAYSPIVFFSLLILAGLNVPISEDAIVLMGGILSSRKNEYTILIFLGIFWGAYLGDIISFYIGKLMGNKLFKNKKDNNLLDKINYYYGQYGVLTLFIGRFIPFGVRNAIFMSAGMGNMKSNLFIVSDFFATLLSIVVYFTLSFKLGQSFEIIFSKIKIIIFAIFIAVIATTIIIYVIKKNKKVDKNLK.

Helical transmembrane passes span 17 to 37 (IAYSPIVFFSLLILAGLNVPI), 58 to 78 (ILIFLGIFWGAYLGDIISFYI), 101 to 121 (YYYGQYGVLTLFIGRFIPFGV), 139 to 159 (FIVSDFFATLLSIVVYFTLSF), and 172 to 192 (IKIIIFAIFIAVIATTIIIYV).

It belongs to the DedA family.

It is found in the cell inner membrane. Required for proper cell division and envelope integrity. This chain is Inner membrane protein BB_0250, found in Borreliella burgdorferi (strain ATCC 35210 / DSM 4680 / CIP 102532 / B31) (Borrelia burgdorferi).